We begin with the raw amino-acid sequence, 467 residues long: Neuromedin-K receptor (467 aa).

Residues 1–86 (MDSFAAAETW…TNQFVQPSWR (86 aa)) are Extracellular-facing. Residues asparagine 23, asparagine 50, and asparagine 75 are each glycosylated (N-linked (GlcNAc...) asparagine). Residues 87–109 (IALWSLAYGVVVAVAVFGNLIVI) form a helical membrane-spanning segment. Residues 110-119 (WIILAHKRMR) are Cytoplasmic-facing. A helical transmembrane segment spans residues 120–141 (TVTNYFLVNLAFSDASMAAFNT). Over 142 to 161 (LVNFIYALHSEWYFGANYCR) the chain is Extracellular. A disulfide bridge connects residues cysteine 160 and cysteine 235. Residues 162-183 (FQNFFPITAVFASIYSMTAIAV) traverse the membrane as a helical segment. The Cytoplasmic portion of the chain corresponds to 184–203 (DRYMAIIDPLKPRLSATATK). Residues 204-224 (IVIGSIWILAFLLALPQCLYS) traverse the membrane as a helical segment. Residues 225 to 247 (KTKVMPGRTLCYVQWPEGPKQHF) lie on the Extracellular side of the membrane. The chain crosses the membrane as a helical span at residues 248 to 272 (IYHIIVIILVYCFPLLIMGITYTIV). Residues 273 to 301 (GITLWGGEIPGDTCDKYHEQLKAKRKVVK) are Cytoplasmic-facing. Residues 302–323 (MMIIVVVTFAICWLPYHIYFIL) traverse the membrane as a helical segment. The Extracellular segment spans residues 324–336 (TAIYQQLNRWKYI). The helical transmembrane segment at 337 to 361 (QQVYLASFWLAMSSTMYNPIIYCCL) threads the bilayer. Residues 362-467 (NKRFRAGFKR…SPYTSMEEYS (106 aa)) are Cytoplasmic-facing. Cysteine 376 carries S-palmitoyl cysteine lipidation. A disordered region spans residues 416–467 (DPSDADNTRSSRKKRATPGDPNFNGCSRRNSKSASTTSSFISSPYTSMEEYS). Residues 447 to 467 (KSASTTSSFISSPYTSMEEYS) show a composition bias toward low complexity.

This sequence belongs to the G-protein coupled receptor 1 family.

It localises to the cell membrane. Functionally, this is a receptor for the tachykinin neuropeptide neuromedin-K (neurokinin B). It is associated with G proteins that activate a phosphatidylinositol-calcium second messenger system. The protein is Neuromedin-K receptor (TACR3) of Oryctolagus cuniculus (Rabbit).